A 407-amino-acid chain; its full sequence is Type II secretion system protein L (407 aa).

The Cytoplasmic segment spans residues 1–257 (MEGSVSEFLT…WLRYWQIWRK (257 aa)). Residues 258-275 (VAIAAGLFVAVSISYSLF) form a helical membrane-spanning segment. Residues 276–407 (QAHQYEAQAD…VFGVFVVKPK (132 aa)) lie on the Periplasmic side of the membrane.

Belongs to the GSP L family. Type II secretion system is composed of four main components: the outer membrane complex, the inner membrane complex, the cytoplasmic secretion ATPase and the periplasm-spanning pseudopilus. Forms homodimers. Interacts with EpsM/GspM. Interacts with EpsE/GspE and EpsF/GspF.

Its subcellular location is the cell inner membrane. Functionally, inner membrane component of the type II secretion system required for the energy-dependent secretion of extracellular factors such as proteases and toxins from the periplasm. Plays a role in the complex assembly and recruits EpsM resulting in a stable complex in the inner membrane. Provides thus a link between the energy-providing EpsE protein in the cytoplasm and the rest of the T2SS machinery. The polypeptide is Type II secretion system protein L (epsL) (Vibrio cholerae serotype O1 (strain ATCC 39315 / El Tor Inaba N16961)).